We begin with the raw amino-acid sequence, 361 residues long: tRNA/tmRNA (uracil-C(5))-methyltransferase (361 aa).

S-adenosyl-L-methionine contacts are provided by glutamine 185, tyrosine 213, asparagine 218, glutamate 234, and aspartate 294. Catalysis depends on cysteine 319, which acts as the Nucleophile. Residue glutamate 353 is the Proton acceptor of the active site.

It belongs to the class I-like SAM-binding methyltransferase superfamily. RNA M5U methyltransferase family. TrmA subfamily.

It catalyses the reaction uridine(54) in tRNA + S-adenosyl-L-methionine = 5-methyluridine(54) in tRNA + S-adenosyl-L-homocysteine + H(+). The catalysed reaction is uridine(341) in tmRNA + S-adenosyl-L-methionine = 5-methyluridine(341) in tmRNA + S-adenosyl-L-homocysteine + H(+). Dual-specificity methyltransferase that catalyzes the formation of 5-methyluridine at position 54 (m5U54) in all tRNAs, and that of position 341 (m5U341) in tmRNA (transfer-mRNA). In Pseudomonas savastanoi pv. phaseolicola (strain 1448A / Race 6) (Pseudomonas syringae pv. phaseolicola (strain 1448A / Race 6)), this protein is tRNA/tmRNA (uracil-C(5))-methyltransferase.